The primary structure comprises 245 residues: Biosynthetic peptidoglycan transglycosylase (245 aa).

A helical membrane pass occupies residues 20–42 (VYAGSVFAGAWLATQLFYLAQIA).

This sequence belongs to the glycosyltransferase 51 family.

It localises to the cell inner membrane. It carries out the reaction [GlcNAc-(1-&gt;4)-Mur2Ac(oyl-L-Ala-gamma-D-Glu-L-Lys-D-Ala-D-Ala)](n)-di-trans,octa-cis-undecaprenyl diphosphate + beta-D-GlcNAc-(1-&gt;4)-Mur2Ac(oyl-L-Ala-gamma-D-Glu-L-Lys-D-Ala-D-Ala)-di-trans,octa-cis-undecaprenyl diphosphate = [GlcNAc-(1-&gt;4)-Mur2Ac(oyl-L-Ala-gamma-D-Glu-L-Lys-D-Ala-D-Ala)](n+1)-di-trans,octa-cis-undecaprenyl diphosphate + di-trans,octa-cis-undecaprenyl diphosphate + H(+). It functions in the pathway cell wall biogenesis; peptidoglycan biosynthesis. In terms of biological role, peptidoglycan polymerase that catalyzes glycan chain elongation from lipid-linked precursors. This is Biosynthetic peptidoglycan transglycosylase from Burkholderia orbicola (strain MC0-3).